The following is a 122-amino-acid chain: LYR motif-containing protein 1 (122 aa).

The protein belongs to the complex I LYR family.

This chain is LYR motif-containing protein 1 (lyrm1), found in Xenopus laevis (African clawed frog).